The sequence spans 207 residues: dTTP/UTP pyrophosphatase (207 aa).

The active-site Proton acceptor is aspartate 79.

Belongs to the Maf family. YhdE subfamily. Requires a divalent metal cation as cofactor.

It is found in the cytoplasm. The catalysed reaction is dTTP + H2O = dTMP + diphosphate + H(+). It catalyses the reaction UTP + H2O = UMP + diphosphate + H(+). In terms of biological role, nucleoside triphosphate pyrophosphatase that hydrolyzes dTTP and UTP. May have a dual role in cell division arrest and in preventing the incorporation of modified nucleotides into cellular nucleic acids. The polypeptide is dTTP/UTP pyrophosphatase (Rhodopseudomonas palustris (strain BisB18)).